Reading from the N-terminus, the 100-residue chain is Aspartyl/glutamyl-tRNA(Asn/Gln) amidotransferase subunit C (100 aa).

The protein belongs to the GatC family. Heterotrimer of A, B and C subunits.

The enzyme catalyses L-glutamyl-tRNA(Gln) + L-glutamine + ATP + H2O = L-glutaminyl-tRNA(Gln) + L-glutamate + ADP + phosphate + H(+). It carries out the reaction L-aspartyl-tRNA(Asn) + L-glutamine + ATP + H2O = L-asparaginyl-tRNA(Asn) + L-glutamate + ADP + phosphate + 2 H(+). Its function is as follows. Allows the formation of correctly charged Asn-tRNA(Asn) or Gln-tRNA(Gln) through the transamidation of misacylated Asp-tRNA(Asn) or Glu-tRNA(Gln) in organisms which lack either or both of asparaginyl-tRNA or glutaminyl-tRNA synthetases. The reaction takes place in the presence of glutamine and ATP through an activated phospho-Asp-tRNA(Asn) or phospho-Glu-tRNA(Gln). This chain is Aspartyl/glutamyl-tRNA(Asn/Gln) amidotransferase subunit C, found in Streptococcus equi subsp. equi (strain 4047).